The primary structure comprises 160 residues: Cytochrome b6-f complex subunit 4 (160 aa).

3 helical membrane passes run 36–56 (LLYM…SLAV), 95–115 (LIGI…PFIE), and 131–151 (AVFL…TLPI).

It belongs to the cytochrome b family. PetD subfamily. As to quaternary structure, the 4 large subunits of the cytochrome b6-f complex are cytochrome b6, subunit IV (17 kDa polypeptide, petD), cytochrome f and the Rieske protein, while the 4 small subunits are petG, petL, petM and petN. The complex functions as a dimer.

It localises to the plastid. The protein resides in the chloroplast thylakoid membrane. Component of the cytochrome b6-f complex, which mediates electron transfer between photosystem II (PSII) and photosystem I (PSI), cyclic electron flow around PSI, and state transitions. The polypeptide is Cytochrome b6-f complex subunit 4 (Bigelowiella natans (Pedinomonas minutissima)).